Here is a 189-residue protein sequence, read N- to C-terminus: GTPase HRas (189 aa).

Methionine 1 bears the N-acetylmethionine; in GTPase HRas; alternate mark. An N-acetylthreonine; in GTPase HRas, N-terminally processed modification is found at threonine 2. GTP-binding positions include 13–18 (GVGKSA), 29–35 (VDEYDPT), 59–60 (AG), 116–119 (NKCD), and 145–147 (SAK). Residues 32–40 (YDPTIEDSY) carry the Effector region motif. Threonine 35 carries (Microbial infection) O-linked (Glc) threonine; by P.sordellii toxin TcsL glycosylation. Cysteine 118 carries the S-nitrosocysteine modification. The tract at residues 166–185 (HKLRKLNPPDESGPGCMSCK) is hypervariable region. Residue lysine 170 forms a Glycyl lysine isopeptide (Lys-Gly) (interchain with G-Cter in ubiquitin) linkage. The S-palmitoyl cysteine moiety is linked to residue cysteine 181. The S-(15-deoxy-Delta12,14-prostaglandin J2-9-yl)cysteine; alternate moiety is linked to residue cysteine 184. The S-palmitoyl cysteine; alternate moiety is linked to residue cysteine 184. The residue at position 186 (cysteine 186) is a Cysteine methyl ester. Cysteine 186 is lipidated: S-farnesyl cysteine. Positions 187–189 (VLS) are cleaved as a propeptide — removed in mature form.

It belongs to the small GTPase superfamily. Ras family. In its GTP-bound form interacts with PLCE1. Interacts with TBC1D10C. Interacts with RGL3. Interacts with HSPD1. Found in a complex with at least BRAF, HRAS, MAP2K1, MAPK3 and RGS14. Interacts (active GTP-bound form) with RGS14 (via RBD 1 domain). Forms a signaling complex with RASGRP1 and DGKZ. Interacts with RASSF5. Interacts with PDE6D. Interacts with IKZF3. Interacts with RACK1. Interacts with PIK3CG; the interaction is required for membrane recruitment and beta-gamma G protein dimer-dependent activation of the PI3K gamma complex PIK3CG:PIK3R6. Interacts with RAPGEF2. Interacts (active GTP-bound form) with both SHOC2 and PP1c (all isoforms) to form a tertiary complex; SHOC2 and PP1c preferably bind M-Ras/MRAS, but they also bind K-Ras/KRAS, N-Ras/NRAS and H-Ras/HRAS. Interacts (GTP-bound form) with MAPKAP1/SIN1; inhibiting H-Ras/HRAS activity. In terms of processing, palmitoylated by the ZDHHC9-GOLGA7 complex. A continuous cycle of de- and re-palmitoylation regulates rapid exchange between plasma membrane and Golgi. Post-translationally, S-nitrosylated; critical for redox regulation. Important for stimulating guanine nucleotide exchange. No structural perturbation on nitrosylation. The covalent modification of cysteine by 15-deoxy-Delta12,14-prostaglandin-J2 is autocatalytic and reversible. It may occur as an alternative to other cysteine modifications, such as S-nitrosylation and S-palmitoylation. In terms of processing, acetylation at Lys-104 prevents interaction with guanine nucleotide exchange factors (GEFs). Post-translationally, fatty-acylated at Lys-170. Ubiquitinated by the BCR(LZTR1) E3 ubiquitin ligase complex at Lys-170 in a non-degradative manner, leading to inhibit Ras signaling by decreasing Ras association with membranes. In terms of processing, (Microbial infection) Glucosylated at Thr-35 by P.sordellii toxin TcsL. Monoglucosylation completely prevents the recognition of the downstream effector, blocking the GTPases in their inactive form, leading to inhibit Ras signaling. In terms of tissue distribution, widely expressed.

The protein localises to the cell membrane. It is found in the golgi apparatus. Its subcellular location is the golgi apparatus membrane. It localises to the nucleus. The protein resides in the cytoplasm. The protein localises to the perinuclear region. It carries out the reaction GTP + H2O = GDP + phosphate + H(+). With respect to regulation, alternates between an inactive form bound to GDP and an active form bound to GTP. Activated by a guanine nucleotide-exchange factor (GEF) and inactivated by a GTPase-activating protein (GAP). Functionally, involved in the activation of Ras protein signal transduction. Ras proteins bind GDP/GTP and possess intrinsic GTPase activity. The sequence is that of GTPase HRas (HRAS) from Homo sapiens (Human).